The following is a 152-amino-acid chain: Small ribosomal subunit protein uS15 (152 aa).

The tract at residues 1 to 20 is disordered; the sequence is MNKRRANGSSHSTRPVRTGS.

This sequence belongs to the universal ribosomal protein uS15 family. In terms of assembly, part of the 30S ribosomal subunit.

The sequence is that of Small ribosomal subunit protein uS15 from Metallosphaera sedula (strain ATCC 51363 / DSM 5348 / JCM 9185 / NBRC 15509 / TH2).